The following is a 238-amino-acid chain: tRNA (guanine-N(1)-)-methyltransferase (238 aa).

S-adenosyl-L-methionine contacts are provided by residues G112 and 131–136; that span reads LGDFIL.

This sequence belongs to the RNA methyltransferase TrmD family. As to quaternary structure, homodimer.

The protein resides in the cytoplasm. The enzyme catalyses guanosine(37) in tRNA + S-adenosyl-L-methionine = N(1)-methylguanosine(37) in tRNA + S-adenosyl-L-homocysteine + H(+). Specifically methylates guanosine-37 in various tRNAs. This chain is tRNA (guanine-N(1)-)-methyltransferase, found in Nostoc punctiforme (strain ATCC 29133 / PCC 73102).